The sequence spans 126 residues: Small ribosomal subunit protein bS6 (126 aa).

The disordered stretch occupies residues 103-126; sequence LKAKDERKAPEALVEEVEAEDADE. Residues 115 to 126 show a composition bias toward acidic residues; sequence LVEEVEAEDADE.

This sequence belongs to the bacterial ribosomal protein bS6 family.

Its function is as follows. Binds together with bS18 to 16S ribosomal RNA. In Glaesserella parasuis serovar 5 (strain SH0165) (Haemophilus parasuis), this protein is Small ribosomal subunit protein bS6.